We begin with the raw amino-acid sequence, 316 residues long: MAKTEAPSLVGKLETEVEIKASAGQFHHMFAGKPHHVSKASPGNIQSCDLHEGDWGTVGSIVFWNYVHDGEAKVAKERIEAVEPEKNLITFRVIEGDLMKEYKSFLITIQVTPKHGGPGSIVHWHLEYEKISDEVAHPETLLQFCVEVSQEIDEHLLSEEEEVKTTETLETEVEIKASAEKFHHMFAGKPHHVSKATPGNIQSCDLHEGDWGTVGSIVFWNYVHDGEAKVAKERIEAVDPEKNLITFRVIEGDLMKEYKSFVITIQVTPKHGGSGSVVHWHFEYEKINEEVAHPETLLQFAVEVSKEIDEHLLAEE.

This sequence belongs to the MLP family.

This Arabidopsis thaliana (Mouse-ear cress) protein is MLP-like protein 34 (MLP34).